Consider the following 344-residue polypeptide: DNA-directed RNA polymerase subunit alpha (344 aa).

The alpha N-terminal domain (alpha-NTD) stretch occupies residues 1–246 (MLVEKFLKDF…EFLFPLVDFE (246 aa)). The segment at 259-344 (ESSNLLDMSI…VLSKNVKISE (86 aa)) is alpha C-terminal domain (alpha-CTD).

This sequence belongs to the RNA polymerase alpha chain family. In terms of assembly, homodimer. The RNAP catalytic core consists of 2 alpha, 1 beta, 1 beta' and 1 omega subunit. When a sigma factor is associated with the core the holoenzyme is formed, which can initiate transcription.

It catalyses the reaction RNA(n) + a ribonucleoside 5'-triphosphate = RNA(n+1) + diphosphate. Its function is as follows. DNA-dependent RNA polymerase catalyzes the transcription of DNA into RNA using the four ribonucleoside triphosphates as substrates. The polypeptide is DNA-directed RNA polymerase subunit alpha (Borreliella burgdorferi (strain ATCC 35210 / DSM 4680 / CIP 102532 / B31) (Borrelia burgdorferi)).